A 2551-amino-acid chain; its full sequence is Probable polyketide synthase 13 (2551 aa).

Positions 10–434 constitute a Ketosynthase family 3 (KS3) domain; the sequence is ENDVAIIGIG…GSNCCLILSQ (425 aa). Catalysis depends on for beta-ketoacyl synthase activity residues cysteine 176, histidine 317, and histidine 358. An acyl/malonyl transferase region spans residues 621–654; that stretch reads GIEVSFIIGHSLGEIPAAYCSGMINIDTLCYLIY. The For acyl/malonyl transferase activity role is filled by serine 631. Positions 928-1057 are N-terminal hotdog fold; it reads TDNLGYLNEN…GDFQLSNHSS (130 aa). A PKS/mFAS DH domain is found at 928–1226; sequence TDNLGYLNEN…CTSLTPIKES (299 aa). Catalysis depends on histidine 961, which acts as the Proton acceptor; for dehydratase activity. The segment at 1076–1226 is C-terminal hotdog fold; that stretch reads NLTKLSRDEL…CTSLTPIKES (151 aa). Residue aspartate 1136 is the Proton donor; for dehydratase activity of the active site. One can recognise a Carrier domain in the interval 2465–2542; sequence DCQTIIKDSF…SSIQYTINSF (78 aa). The residue at position 2502 (serine 2502) is an O-(pantetheine 4'-phosphoryl)serine.

Pantetheine 4'-phosphate is required as a cofactor.

In terms of biological role, probable polyketide synthase. The chain is Probable polyketide synthase 13 (pks13) from Dictyostelium discoideum (Social amoeba).